A 369-amino-acid chain; its full sequence is Type 2 DNA topoisomerase 6 subunit A (369 aa).

A Topo IIA-type catalytic domain is found at 10-146 (KPREIAKQKI…LGFIPEEDGS (137 aa)). The active-site O-(5'-phospho-DNA)-tyrosine intermediate is the Tyr103. Residues Glu197 and Asp249 each coordinate Mg(2+).

This sequence belongs to the TOP6A family. As to quaternary structure, homodimer. Heterotetramer of two Top6A and two Top6B chains. It depends on Mg(2+) as a cofactor.

The catalysed reaction is ATP-dependent breakage, passage and rejoining of double-stranded DNA.. Functionally, relaxes both positive and negative superturns and exhibits a strong decatenase activity. The chain is Type 2 DNA topoisomerase 6 subunit A from Methanocaldococcus jannaschii (strain ATCC 43067 / DSM 2661 / JAL-1 / JCM 10045 / NBRC 100440) (Methanococcus jannaschii).